A 251-amino-acid polypeptide reads, in one-letter code: Ubiquinone/menaquinone biosynthesis C-methyltransferase UbiE (251 aa).

S-adenosyl-L-methionine contacts are provided by residues Thr74, Asp95, 123–124 (NA), and Ser140.

Belongs to the class I-like SAM-binding methyltransferase superfamily. MenG/UbiE family.

The catalysed reaction is a 2-demethylmenaquinol + S-adenosyl-L-methionine = a menaquinol + S-adenosyl-L-homocysteine + H(+). It catalyses the reaction a 2-methoxy-6-(all-trans-polyprenyl)benzene-1,4-diol + S-adenosyl-L-methionine = a 5-methoxy-2-methyl-3-(all-trans-polyprenyl)benzene-1,4-diol + S-adenosyl-L-homocysteine + H(+). The protein operates within quinol/quinone metabolism; menaquinone biosynthesis; menaquinol from 1,4-dihydroxy-2-naphthoate: step 2/2. It participates in cofactor biosynthesis; ubiquinone biosynthesis. In terms of biological role, methyltransferase required for the conversion of demethylmenaquinol (DMKH2) to menaquinol (MKH2) and the conversion of 2-polyprenyl-6-methoxy-1,4-benzoquinol (DDMQH2) to 2-polyprenyl-3-methyl-6-methoxy-1,4-benzoquinol (DMQH2). This chain is Ubiquinone/menaquinone biosynthesis C-methyltransferase UbiE, found in Enterobacter sp. (strain 638).